The sequence spans 226 residues: UPF0758 protein Daro_3142 (226 aa).

Positions 103-226 (SFTSPGKVRD…PLSFAERGLL (124 aa)) constitute an MPN domain. Zn(2+)-binding residues include His-174, His-176, and Asp-187. Positions 174-187 (HNHPSGIAEPSRAD) match the JAMM motif motif.

The protein belongs to the UPF0758 family.

The chain is UPF0758 protein Daro_3142 from Dechloromonas aromatica (strain RCB).